The following is a 257-amino-acid chain: Low affinity immunoglobulin gamma Fc region receptor III-A (257 aa).

The N-terminal stretch at 1 to 19 is a signal peptide; that stretch reads MWQLLSPTALLLLVSVPGT. Residues 20–209 are Extracellular-facing; it reads HAEDPPKSVV…ILSFFLPWHQ (190 aa). 2 Ig-like C2-type domains span residues 25 to 104 and 108 to 190; these read PKSV…LRLE and GWLL…VKVT. Intrachain disulfides connect Cys48–Cys90 and Cys129–Cys173. Residues Asn64, Asn134, and Asn162 are each glycosylated (N-linked (GlcNAc...) asparagine). The N-linked (GlcNAc...) asparagine; in variant N-181 glycan is linked to Asp181. Residues 210-230 form a helical membrane-spanning segment; that stretch reads IIFCLVMGFLFAVDTGLYFSV. Topologically, residues 231–257 are cytoplasmic; the sequence is RKVLRSSKEDWRNGKVTWSRDPADKGG.

As to quaternary structure, forms a heterooligomeric complex with ITAM-containing signaling subunits FCER1G. Interacts (via transmembrane domain) with signaling subunits; this interaction is a prerequisite for receptor complex expression on the cell surface and intracellular signal transduction. Binds the Fc region of antigen-complexed IgG. In terms of tissue distribution, expressed in polymorphonuclear leukocytes, pulmonary alveolar macrophages and peripheral blood mononuclear cells (at protein level). Found in spleen, and at very low levels in lymph nodes but not in thymus or liver.

Its subcellular location is the cell membrane. In terms of biological role, receptor for the invariable Fc fragment of immunoglobulin gamma (IgG). Optimally activated upon binding of clustered antigen-IgG complexes displayed on cell surfaces, triggers lysis of antibody-coated cells, a process known as antibody-dependent cellular cytotoxicity (ADCC). Does not bind free monomeric IgG, thus avoiding inappropriate effector cell activation in the absence of antigenic trigger. Mediates IgG effector functions on natural killer (NK) cells. Binds antigen-IgG complexes generated upon infection and triggers NK cell-dependent cytokine production and degranulation to limit viral load and propagation. Fc-binding subunit that associates with FCER1G adapter to form functional signaling complexes. Following the engagement of antigen-IgG complexes, triggers phosphorylation of immunoreceptor tyrosine-based activation motif (ITAM)-containing adapter with subsequent activation of phosphatidylinositol 3-kinase signaling and sustained elevation of intracellular calcium that ultimately drive NK cell activation. Mediates enhanced ADCC in response to afucosylated IgGs. The chain is Low affinity immunoglobulin gamma Fc region receptor III-A from Sus scrofa (Pig).